The sequence spans 519 residues: Xylose import ATP-binding protein XylG (519 aa).

ABC transporter domains follow at residues 6-245 (LTMR…VGRE) and 262-507 (LEAR…LTPA). Residue 38-45 (GENGAGKS) coordinates ATP.

This sequence belongs to the ABC transporter superfamily. Xylose importer (TC 3.A.1.2.4) family. As to quaternary structure, the complex is composed of two ATP-binding proteins (XylG), two transmembrane proteins (XylH) and a solute-binding protein (XylF).

The protein resides in the cell inner membrane. It carries out the reaction D-xylose(out) + ATP + H2O = D-xylose(in) + ADP + phosphate + H(+). Its function is as follows. Part of the ABC transporter complex XylFGH involved in xylose import. Responsible for energy coupling to the transport system. The protein is Xylose import ATP-binding protein XylG of Burkholderia ambifaria (strain ATCC BAA-244 / DSM 16087 / CCUG 44356 / LMG 19182 / AMMD) (Burkholderia cepacia (strain AMMD)).